A 251-amino-acid polypeptide reads, in one-letter code: Protein unc-119 homolog B (251 aa).

Polar residues predominate over residues 1–13 (MSGSNPKAATAGS). Residues 1–56 (MSGSNPKAATAGSQAGPGGLVAGKEEKKKAGGGVLNRLKARRQGPPHTPDDGSGAA) are disordered. The residue at position 2 (Ser-2) is an N-acetylserine. The residue at position 24 (Lys-24) is an N6-acetyllysine. Tetradecanoate is bound at residue Tyr-142.

Belongs to the PDE6D/unc-119 family. As to quaternary structure, found in a complex with ARL3, RP2 and UNC119B; RP2 induces hydrolysis of GTP ARL3 in the complex, leading to the release of UNC119B. Interacts with NPHP3 (when myristoylated). Interacts with CYS1 (when myristoylated). Interacts with MACIR; interaction only takes place when UNC119B is not liganded with myristoylated proteins.

The protein resides in the cell projection. It localises to the cilium. Myristoyl-binding protein that acts as a cargo adapter: specifically binds the myristoyl moiety of a subset of N-terminally myristoylated proteins and is required for their localization. Binds myristoylated NPHP3 and plays a key role in localization of NPHP3 to the primary cilium membrane. Does not bind all myristoylated proteins. Probably plays a role in trafficking proteins in photoreceptor cells. This Mus musculus (Mouse) protein is Protein unc-119 homolog B (Unc119b).